The primary structure comprises 183 residues: Glutathione-regulated potassium-efflux system ancillary protein KefG (183 aa).

The protein belongs to the NAD(P)H dehydrogenase (quinone) family. KefG subfamily. As to quaternary structure, interacts with KefB.

Its subcellular location is the cell inner membrane. The catalysed reaction is a quinone + NADH + H(+) = a quinol + NAD(+). The enzyme catalyses a quinone + NADPH + H(+) = a quinol + NADP(+). In terms of biological role, regulatory subunit of a potassium efflux system that confers protection against electrophiles. Required for full activity of KefB. In Serratia proteamaculans (strain 568), this protein is Glutathione-regulated potassium-efflux system ancillary protein KefG.